We begin with the raw amino-acid sequence, 561 residues long: Dihydroxy-acid dehydratase (561 aa).

Asp-80 serves as a coordination point for Mg(2+). Residue Cys-121 coordinates [2Fe-2S] cluster. Asp-122 and Lys-123 together coordinate Mg(2+). Lys-123 is modified (N6-carboxylysine). Cys-194 is a binding site for [2Fe-2S] cluster. Mg(2+) is bound at residue Glu-448. Ser-474 (proton acceptor) is an active-site residue.

It belongs to the IlvD/Edd family. As to quaternary structure, homodimer. [2Fe-2S] cluster serves as cofactor. Requires Mg(2+) as cofactor.

The catalysed reaction is (2R)-2,3-dihydroxy-3-methylbutanoate = 3-methyl-2-oxobutanoate + H2O. It carries out the reaction (2R,3R)-2,3-dihydroxy-3-methylpentanoate = (S)-3-methyl-2-oxopentanoate + H2O. It participates in amino-acid biosynthesis; L-isoleucine biosynthesis; L-isoleucine from 2-oxobutanoate: step 3/4. It functions in the pathway amino-acid biosynthesis; L-valine biosynthesis; L-valine from pyruvate: step 3/4. Functionally, functions in the biosynthesis of branched-chain amino acids. Catalyzes the dehydration of (2R,3R)-2,3-dihydroxy-3-methylpentanoate (2,3-dihydroxy-3-methylvalerate) into 2-oxo-3-methylpentanoate (2-oxo-3-methylvalerate) and of (2R)-2,3-dihydroxy-3-methylbutanoate (2,3-dihydroxyisovalerate) into 2-oxo-3-methylbutanoate (2-oxoisovalerate), the penultimate precursor to L-isoleucine and L-valine, respectively. This Anaeromyxobacter sp. (strain Fw109-5) protein is Dihydroxy-acid dehydratase.